The following is a 258-amino-acid chain: L-rhamnose-1-dehydrogenase (258 aa).

Ile-19, Asp-68, and Asn-95 together coordinate NADP(+). Residues Ser-147 and Tyr-161 each act as proton donor in the active site. 4 residues coordinate NADP(+): Tyr-161, Lys-165, Ile-194, and Thr-196. Lys-165 (lowers pKa of active site Tyr) is an active-site residue.

Belongs to the short-chain dehydrogenases/reductases (SDR) family.

It catalyses the reaction L-rhamnofuranose + NAD(+) = L-rhamnono-1,4-lactone + NADH + H(+). Functionally, NAD-dependent dehydrogenase that has high activity with L-rhamnose and L-lyxose, and shows only low activity with L-mannose. Has no activity with NADP. Catalyzes the first step in an alternative pathway for rhamnose utilization that does not involve phosphorylated intermediates. The protein is L-rhamnose-1-dehydrogenase (DHG2) of Scheffersomyces stipitis (strain ATCC 58785 / CBS 6054 / NBRC 10063 / NRRL Y-11545) (Yeast).